A 470-amino-acid chain; its full sequence is Argininosuccinate lyase (470 aa).

This sequence belongs to the lyase 1 family. Argininosuccinate lyase subfamily.

The protein localises to the cytoplasm. It catalyses the reaction 2-(N(omega)-L-arginino)succinate = fumarate + L-arginine. Its pathway is amino-acid biosynthesis; L-arginine biosynthesis; L-arginine from L-ornithine and carbamoyl phosphate: step 3/3. This Mycobacterium leprae (strain Br4923) protein is Argininosuccinate lyase.